The following is a 508-amino-acid chain: Steroid 17-alpha-hydroxylase/17,20 lyase (508 aa).

N202 is a binding site for substrate. Position 442 (C442) interacts with heme.

It belongs to the cytochrome P450 family. Heme serves as cofactor.

Its subcellular location is the endoplasmic reticulum membrane. It is found in the microsome membrane. It carries out the reaction a C21-steroid + reduced [NADPH--hemoprotein reductase] + O2 = a 17alpha-hydroxy-C21-steroid + oxidized [NADPH--hemoprotein reductase] + H2O + H(+). The catalysed reaction is progesterone + reduced [NADPH--hemoprotein reductase] + O2 = 17alpha-hydroxyprogesterone + oxidized [NADPH--hemoprotein reductase] + H2O + H(+). It catalyses the reaction pregnenolone + reduced [NADPH--hemoprotein reductase] + O2 = 17alpha-hydroxypregnenolone + oxidized [NADPH--hemoprotein reductase] + H2O + H(+). The enzyme catalyses 17alpha-hydroxyprogesterone + reduced [NADPH--hemoprotein reductase] + O2 = androst-4-ene-3,17-dione + acetate + oxidized [NADPH--hemoprotein reductase] + H2O + 2 H(+). It carries out the reaction 17alpha-hydroxyprogesterone + reduced [NADPH--hemoprotein reductase] + O2 = 16alpha,17alpha-dihydroxyprogesterone + oxidized [NADPH--hemoprotein reductase] + H2O + H(+). The catalysed reaction is 16alpha,17alpha-dihydroxyprogesterone + reduced [NADPH--hemoprotein reductase] + O2 = 6beta,16alpha,17alpha-trihydroxyprogesterone + oxidized [NADPH--hemoprotein reductase] + H2O + H(+). It catalyses the reaction 17alpha-hydroxypregnenolone + reduced [NADPH--hemoprotein reductase] + O2 = 3beta-hydroxyandrost-5-en-17-one + acetate + oxidized [NADPH--hemoprotein reductase] + H2O + 2 H(+). The enzyme catalyses 16alpha,17alpha-dihydroxypregnenolone + reduced [NADPH--hemoprotein reductase] + O2 = 3beta,16alpha-dihydroxy-androst-5-en-17-one + acetate + oxidized [NADPH--hemoprotein reductase] + H2O + 2 H(+). It carries out the reaction 3beta-hydroxyandrost-5-en-17-one + reduced [NADPH--hemoprotein reductase] + O2 = 3beta,16alpha-dihydroxy-androst-5-en-17-one + oxidized [NADPH--hemoprotein reductase] + H2O + H(+). The catalysed reaction is androst-4-ene-3,17-dione + reduced [NADPH--hemoprotein reductase] + O2 = 16alpha-hydroxyandrost-4-ene-3,17-dione + oxidized [NADPH--hemoprotein reductase] + H2O + H(+). It functions in the pathway steroid hormone biosynthesis. It participates in steroid biosynthesis; glucocorticoid biosynthesis. Its activity is regulated as follows. Regulated predominantly by intracellular cAMP levels. The 17,20-lyase activity is stimulated by cytochrome b5, which acts as an allosteric effector increasing the Vmax of the lyase activity. In terms of biological role, a cytochrome P450 monooxygenase involved in corticoid and androgen biosynthesis. Catalyzes 17-alpha hydroxylation of C21 steroids, which is common for both pathways. A second oxidative step, required only for androgen synthesis, involves an acyl-carbon cleavage. The 17-alpha hydroxy intermediates, as part of adrenal glucocorticoids biosynthesis pathway, are precursors of cortisol. Hydroxylates steroid hormones, pregnenolone and progesterone to form 17-alpha hydroxy metabolites, followed by the cleavage of the C17-C20 bond to form C19 steroids, dehydroepiandrosterone (DHEA) and androstenedione. Has 16-alpha hydroxylase activity. Catalyzes 16-alpha hydroxylation of 17-alpha hydroxy pregnenolone, followed by the cleavage of the C17-C20 bond to form 16-alpha-hydroxy DHEA. Also 16-alpha hydroxylates androgens, relevant for estriol synthesis. Mechanistically, uses molecular oxygen inserting one oxygen atom into a substrate, and reducing the second into a water molecule, with two electrons provided by NADPH via cytochrome P450 reductase (CPR; NADPH-ferrihemoprotein reductase). This is Steroid 17-alpha-hydroxylase/17,20 lyase (CYP17A1) from Papio cynocephalus (Yellow baboon).